Reading from the N-terminus, the 103-residue chain is MLMNDKIRIRLKAYDHKLLDQSAADIVDTARRTGAKVVGPIPLPTRINKYCVLRSPHVDKKSREQFEVRTHKRLLDILEPTQQTVDALMKLDLSPGVDVEIKV.

The protein belongs to the universal ribosomal protein uS10 family. In terms of assembly, part of the 30S ribosomal subunit.

In terms of biological role, involved in the binding of tRNA to the ribosomes. The polypeptide is Small ribosomal subunit protein uS10 (Desulfatibacillum aliphaticivorans).